A 653-amino-acid chain; its full sequence is MSQYAAELCKLLITDNFGELYALIFIYLLNHGRQPLPRIVQNTHLSPRQVRHGLAVLVQQHLVFHCTSLDDGITYYESNWRSAYNLVRSGKIIQLVEERLGNRAASIVSTLLALGHAKISYLESLPELQPGHERPVKANGINGVHGGEGEDVNGVDNDAENHTDHAHDYQQDGPVREPNGYHDSDPGLQVQTILQQLAAFGFITRVRNQHFQSPEDNFDAALKAAKSNGDSYGLKGNKLEAKLTEDAEKLVKEWTDGRISRALPSASLLRGVKRRLRKDDSSAPRKRLKLDGPLEDDVKDEDDGDDFSDDDYHNDEMAALDPNMVIRVNYEKFNVALRNRRLIELADQNGSAVTSQVYETLLSHIEVQTPTCREHVEAIPEGEEAEQYSVSIRLDTISRDLDIDLDLAGVIAGIIPDNINGIKEDEDDEDEEGGPVSMKRRGPSRNYLVDQHLSFLAAEPSFFCTRRMQAGMITWAVEYRHLAKKLRHLELERLIEARFGGFAVRIVRVLAAKGKLDEKRLQEISLMASKDLRQILGQMASAGFVELQEVPRDAQRQPSRTMYLWFYDPDRVRFMVIEDTYKSMSRCLQRIRVEREKLKFLLEKTERSDVKGNEDRYLSAAELQTLKEWRDTEKLLLGEVARLDELVAVLRDY.

Disordered regions lie at residues 141 to 186 (INGV…DSDP), 280 to 309 (DSSA…DFSD), and 422 to 442 (IKED…KRRG). Residues 159 to 170 (AENHTDHAHDYQ) are compositionally biased toward basic and acidic residues. Composition is skewed to acidic residues over residues 293-309 (PLED…DFSD) and 424-433 (EDEDDEDEEG). The interval 580–601 (TYKSMSRCLQRIRVEREKLKFL) is leucine-zipper.

It belongs to the RNA polymerase beta chain family. In terms of assembly, component of the RNA polymerase III (Pol III) complex consisting of 17 subunits.

Its subcellular location is the nucleus. DNA-dependent RNA polymerase catalyzes the transcription of DNA into RNA using the four ribonucleoside triphosphates as substrates. Specific core component of RNA polymerase III which synthesizes small RNAs, such as 5S rRNA and tRNAs. The polypeptide is DNA-directed RNA polymerase III subunit RPC-3 (RPC-82) (Coccidioides immitis (strain RS) (Valley fever fungus)).